The primary structure comprises 196 residues: Recombination protein RecR (196 aa).

Residues 55–70 form a C4-type zinc finger; that stretch reads CELCGNLESESPCSIC. A Toprim domain is found at 78–173; sequence DIVCVVEEIT…KLSFLAHGIP (96 aa).

The protein belongs to the RecR family.

Its function is as follows. May play a role in DNA repair. It seems to be involved in an RecBC-independent recombinational process of DNA repair. It may act with RecF and RecO. This chain is Recombination protein RecR, found in Neorickettsia sennetsu (strain ATCC VR-367 / Miyayama) (Ehrlichia sennetsu).